We begin with the raw amino-acid sequence, 443 residues long: C4-dicarboxylate transport protein (443 aa).

A run of 9 helical transmembrane segments spans residues 17 to 37 (PFYSHLYVQVLAAIAAGILLG), 57 to 77 (LVKMVIAPVIFLTVATGIAGM), 92 to 112 (LYFLTFSTLALVIGMIVANVV), 139 to 159 (EQSIVGFLTNIIPTTIVGAFA), 161 to 181 (GDILQVLFFSVLFGIALAMVG), 201 to 221 (LVGILMKAAPIGAFGAMAFTI), 234 to 254 (MLIGTFYITSLLFVLVVLGAV), 320 to 340 (IYMTLAALFIAQATGIQLSWG), and 368 to 388 (AATLSVVPSVPVAGMALILGI).

Belongs to the dicarboxylate/amino acid:cation symporter (DAACS) (TC 2.A.23) family.

It localises to the cell inner membrane. In terms of biological role, responsible for the transport of dicarboxylates such as succinate, fumarate, and malate from the periplasm across the membrane. This chain is C4-dicarboxylate transport protein, found in Rhizobium etli (strain ATCC 51251 / DSM 11541 / JCM 21823 / NBRC 15573 / CFN 42).